The primary structure comprises 304 residues: MDSAKPLALPADWRDFFALTKPRVMTLVIFTGLCGLLAAPGTIHPVIAFTAILCIAVGAGGAAALNQWWEADIDAGMKRTAQRPLPAGRMDRTSARDFGFALAGGSVFVMGLGVGWLAAVILAFSIFYYSWIYTVWLKPRTPQNIVIGGGAGAFPPMIGWVAVTGDITLMPVLLFLIIFMWTPPHFWALALFVQTDYAKVGIPMMPVVAGERSTRKQILAYSILLLPLTLVPWWIGGAGAVYGWSALVLGLVFVALSVKVGLRRSVPNDGMLPEKRLFGYSVLYLFVLFGMLVGDRLATVQGWQ.

The next 7 helical transmembrane spans lie at 24-44 (VMTL…GTIH), 45-65 (PVIA…AAAL), 107-127 (VFVM…FSIF), 145-165 (IVIG…AVTG), 172-192 (VLLF…LALF), 234-254 (WIGG…LVFV), and 277-297 (LFGY…GDRL).

It belongs to the UbiA prenyltransferase family. Protoheme IX farnesyltransferase subfamily.

It is found in the cell inner membrane. The enzyme catalyses heme b + (2E,6E)-farnesyl diphosphate + H2O = Fe(II)-heme o + diphosphate. It functions in the pathway porphyrin-containing compound metabolism; heme O biosynthesis; heme O from protoheme: step 1/1. Functionally, converts heme B (protoheme IX) to heme O by substitution of the vinyl group on carbon 2 of heme B porphyrin ring with a hydroxyethyl farnesyl side group. This Novosphingobium aromaticivorans (strain ATCC 700278 / DSM 12444 / CCUG 56034 / CIP 105152 / NBRC 16084 / F199) protein is Protoheme IX farnesyltransferase.